We begin with the raw amino-acid sequence, 423 residues long: Phosphoribosylamine--glycine ligase (423 aa).

An ATP-grasp domain is found at 107–312 (KDLCARYGIP…LLPLLYAAAT (206 aa)). 133-193 (IREEGAPIVI…EAYLDGEEAS (61 aa)) provides a ligand contact to ATP. Mg(2+)-binding residues include Glu282 and Asn284.

Belongs to the GARS family. Mg(2+) serves as cofactor. Requires Mn(2+) as cofactor.

It catalyses the reaction 5-phospho-beta-D-ribosylamine + glycine + ATP = N(1)-(5-phospho-beta-D-ribosyl)glycinamide + ADP + phosphate + H(+). The protein operates within purine metabolism; IMP biosynthesis via de novo pathway; N(1)-(5-phospho-D-ribosyl)glycinamide from 5-phospho-alpha-D-ribose 1-diphosphate: step 2/2. This is Phosphoribosylamine--glycine ligase from Rhizobium meliloti (strain 1021) (Ensifer meliloti).